Here is a 426-residue protein sequence, read N- to C-terminus: MKHTFVLFLSLILLVLPGCSAEKSSADTAKKTLTIYSTMSTDSERDTFRKLAAAFEKEHSDIHVSLHFPGNDYENMMRVRMAANDLPDLFDTHGWGKIRYGEYTADLRDMKWTQDLDPNLNSILKNKSGKVYAYPINQAKDGLAYNRNILDRYGIAPPETMDDFIKALRTIKEKSKGSIVPFWFAGYDKSSFAQYYDQFATPLLITDPAHNEKKQLINGTFQWSKFTYLSEILKQMQKEKLINIDAVTAKKSQLIELMAQNKIAFTMQGGTLGQDVAQINPNVKVGIIPTPAIHPGDDPIWIGGERYTLAAWKDSPQLKEAKDFIAFMARPANAKQMAEATSLPSGLTNVKADIFYANDYEYYQDVKVEPYFDRLYLPNGMWDVLGTVGQELAADILAPQDISQKLGREYKRLREQSETQGAENNE.

The first 18 residues, 1–18 (MKHTFVLFLSLILLVLPG), serve as a signal peptide directing secretion. The N-palmitoyl cysteine moiety is linked to residue cysteine 19. Cysteine 19 is lipidated: S-diacylglycerol cysteine.

This sequence belongs to the bacterial solute-binding protein 1 family. As to quaternary structure, the complex is composed of two ATP-binding proteins (MsmX), two transmembrane proteins (MelC and MelD) and a solute-binding protein (MelE).

It is found in the cell membrane. Its function is as follows. Part of the ABC transporter complex MelEDC-MsmX involved in melibiose, raffinose and stachyose import. Binds melibiose, raffinose and stachyose. The protein is Melibiose/raffinose/stachyose-binding protein MelE of Bacillus subtilis (strain 168).